Consider the following 178-residue polypeptide: Gamma-crystallin S (178 aa).

Ser-2 is modified (N-acetylserine). The interval 2 to 5 is N-terminal arm; sequence SKTG. 2 Beta/gamma crystallin 'Greek key' domains span residues 6–44 and 45–87; these read TKIT…KVEG and GTWA…RAVH. The segment at 88–93 is connecting peptide; it reads LPSGGQ. 2 consecutive Beta/gamma crystallin 'Greek key' domains span residues 94–134 and 135–177; these read YKIQ…KVLE and GVWI…RRIV.

The protein belongs to the beta/gamma-crystallin family. Monomer.

Its function is as follows. Crystallins are the dominant structural components of the vertebrate eye lens. The protein is Gamma-crystallin S (CRYGS) of Homo sapiens (Human).